The following is a 570-amino-acid chain: Alpha-1,2-mannosyltransferase ALG9 (570 aa).

Residues 1–37 form a disordered region; sequence MDLTTTRQRRPLISDSSSSSSTKSYSKTDKPGRSNGG. Residues 14 to 25 are compositionally biased toward low complexity; it reads SDSSSSSSTKSY. 8 helical membrane passes run 129-149, 160-180, 208-228, 237-257, 297-317, 324-344, 349-369, and 381-401; these read AVRL…VVAL, YAVA…SFLP, VVGV…VVIY, AFIA…LVDY, FNNF…YPVI, ALLV…LQPH, FLYP…ENIP, and SLLV…ILCA. Asn473 carries N-linked (GlcNAc...) asparagine glycosylation.

Belongs to the glycosyltransferase 22 family.

It is found in the endoplasmic reticulum membrane. The catalysed reaction is an alpha-D-Man-(1-&gt;2)-alpha-D-Man-(1-&gt;2)-alpha-D-Man-(1-&gt;3)-[alpha-D-Man-(1-&gt;3)-alpha-D-Man-(1-&gt;6)]-beta-D-Man-(1-&gt;4)-beta-D-GlcNAc-(1-&gt;4)-alpha-D-GlcNAc-diphospho-di-trans,poly-cis-dolichol + a di-trans,poly-cis-dolichyl beta-D-mannosyl phosphate = an alpha-D-Man-(1-&gt;2)-alpha-D-Man-(1-&gt;2)-alpha-D-Man-(1-&gt;3)-[alpha-D-Man-(1-&gt;2)-alpha-D-Man-(1-&gt;3)-alpha-D-Man-(1-&gt;6)]-beta-D-Man-(1-&gt;4)-beta-D-GlcNAc-(1-&gt;4)-alpha-D-GlcNAc-diphospho-di-trans,poly-cis-dolichol + a di-trans,poly-cis-dolichyl phosphate + H(+). It catalyses the reaction an alpha-D-Man-(1-&gt;2)-alpha-D-Man-(1-&gt;2)-alpha-D-Man-(1-&gt;3)-[alpha-D-Man-(1-&gt;2)-alpha-D-Man-(1-&gt;3)-[alpha-D-Man-(1-&gt;6)]-alpha-D-Man-(1-&gt;6)]-beta-D-Man-(1-&gt;4)-beta-D-GlcNAc-(1-&gt;4)-alpha-D-GlcNAc-diphospho-di-trans,poly-cis-dolichol + a di-trans,poly-cis-dolichyl beta-D-mannosyl phosphate = an alpha-D-Man-(1-&gt;2)-alpha-D-Man-(1-&gt;2)-alpha-D-Man-(1-&gt;3)-[alpha-D-Man-(1-&gt;2)-alpha-D-Man-(1-&gt;3)-[alpha-D-Man-(1-&gt;2)-alpha-D-Man-(1-&gt;6)]-alpha-D-Man-(1-&gt;6)]-beta-D-Man-(1-&gt;4)-beta-D-GlcNAc-(1-&gt;4)-alpha-D-GlcNAc-diphospho-di-trans,poly-cis-dolichol + a di-trans,poly-cis-dolichyl phosphate + H(+). Its pathway is protein modification; protein glycosylation. In terms of biological role, mannosyltransferase that operates in the biosynthetic pathway of dolichol-linked oligosaccharides, the glycan precursors employed in protein asparagine (N)-glycosylation. The assembly of dolichol-linked oligosaccharides begins on the cytosolic side of the endoplasmic reticulum membrane and finishes in its lumen. The sequential addition of sugars to dolichol pyrophosphate produces dolichol-linked oligosaccharides containing fourteen sugars, including two GlcNAcs, nine mannoses and three glucoses. Once assembled, the oligosaccharide is transferred from the lipid to nascent proteins by oligosaccharyltransferases. In the lumen of the endoplasmic reticulum, catalyzes the addition of the seventh and ninth alpha-1,2-linked mannose residues to Man(6)GlcNAc(2)-PP-dolichol and Man(8)GlcNAc(2)-PP-dolichol respectively. The polypeptide is Alpha-1,2-mannosyltransferase ALG9 (ALG9) (Arabidopsis thaliana (Mouse-ear cress)).